Consider the following 355-residue polypeptide: Phosphoribosylformylglycinamidine cyclo-ligase (355 aa).

The protein belongs to the AIR synthase family.

The protein resides in the cytoplasm. The enzyme catalyses 2-formamido-N(1)-(5-O-phospho-beta-D-ribosyl)acetamidine + ATP = 5-amino-1-(5-phospho-beta-D-ribosyl)imidazole + ADP + phosphate + H(+). Its pathway is purine metabolism; IMP biosynthesis via de novo pathway; 5-amino-1-(5-phospho-D-ribosyl)imidazole from N(2)-formyl-N(1)-(5-phospho-D-ribosyl)glycinamide: step 2/2. This Paraburkholderia xenovorans (strain LB400) protein is Phosphoribosylformylglycinamidine cyclo-ligase.